The sequence spans 382 residues: ATP phosphoribosyltransferase regulatory subunit (382 aa).

Belongs to the class-II aminoacyl-tRNA synthetase family. HisZ subfamily. In terms of assembly, heteromultimer composed of HisG and HisZ subunits.

It is found in the cytoplasm. It participates in amino-acid biosynthesis; L-histidine biosynthesis; L-histidine from 5-phospho-alpha-D-ribose 1-diphosphate: step 1/9. Functionally, required for the first step of histidine biosynthesis. May allow the feedback regulation of ATP phosphoribosyltransferase activity by histidine. The sequence is that of ATP phosphoribosyltransferase regulatory subunit from Lacticaseibacillus casei (strain BL23) (Lactobacillus casei).